Reading from the N-terminus, the 80-residue chain is Defensin-like protein 16 (80 aa).

Residues 1–29 (MAKFASIITLIFAALVLFAAFDAPAMVEA) form the signal peptide. A Pyrrolidone carboxylic acid modification is found at Gln-30. 4 disulfides stabilise this stretch: Cys-33/Cys-80, Cys-44/Cys-65, Cys-50/Cys-74, and Cys-54/Cys-76.

It belongs to the DEFL family. As to expression, predominantly expressed in leaves.

Its subcellular location is the secreted. Its function is as follows. Confers broad-spectrum resistance to pathogens. Has antifungal activity in vitro. The sequence is that of Defensin-like protein 16 (PDF1.2A) from Arabidopsis thaliana (Mouse-ear cress).